Consider the following 155-residue polypeptide: Putative pre-16S rRNA nuclease (155 aa).

This sequence belongs to the YqgF nuclease family.

Its subcellular location is the cytoplasm. Could be a nuclease involved in processing of the 5'-end of pre-16S rRNA. The sequence is that of Putative pre-16S rRNA nuclease from Wolbachia sp. subsp. Brugia malayi (strain TRS).